The sequence spans 200 residues: dTTP/UTP pyrophosphatase (200 aa).

D72 (proton acceptor) is an active-site residue.

This sequence belongs to the Maf family. YhdE subfamily. It depends on a divalent metal cation as a cofactor.

The protein resides in the cytoplasm. The catalysed reaction is dTTP + H2O = dTMP + diphosphate + H(+). It catalyses the reaction UTP + H2O = UMP + diphosphate + H(+). Its function is as follows. Nucleoside triphosphate pyrophosphatase that hydrolyzes dTTP and UTP. May have a dual role in cell division arrest and in preventing the incorporation of modified nucleotides into cellular nucleic acids. The polypeptide is dTTP/UTP pyrophosphatase (Pseudomonas savastanoi pv. phaseolicola (strain 1448A / Race 6) (Pseudomonas syringae pv. phaseolicola (strain 1448A / Race 6))).